We begin with the raw amino-acid sequence, 506 residues long: Transcription factor CP2 (506 aa).

In terms of domain architecture, Grh/CP2 DB spans 61–300; that stretch reads ENKILPFQYV…SPGFNSSHNS (240 aa). Positions 133–395 are DNA-binding; sequence EHQQLEGWRW…LFNALKGRIV (263 aa). 2 disordered regions span residues 238–268 and 291–316; these read FKPKGADRKQKTDREKMEKRTPQEKEKYQPS and SPGFNSSHNSFPIGEGNGSPNHQPEP. Basic and acidic residues predominate over residues 241 to 265; that stretch reads KGADRKQKTDREKMEKRTPQEKEKY. A compositionally biased stretch (polar residues) spans 291–300; it reads SPGFNSSHNS.

Belongs to the grh/CP2 family. CP2 subfamily. In terms of assembly, component of the SSP (stage selector protein) complex, which appears to be a heteromer of TFCP2 and 2 copies of NFE4.

The protein localises to the nucleus. Its function is as follows. May function as a transcription factor. The polypeptide is Transcription factor CP2 (tfcp2) (Xenopus laevis (African clawed frog)).